The sequence spans 283 residues: uncharacterized protein (283 aa).

The next 3 helical transmembrane spans lie at 18–38, 61–81, and 94–114; these read VYDIIVVIVVMALATIIAKLI, VIYFGIIIVAFIAVLPALGLD, and IVLGFASQSVVANLVSGIFLI.

It belongs to the MscS (TC 1.A.23) family.

It is found in the cell membrane. This is an uncharacterized protein from Archaeoglobus fulgidus (strain ATCC 49558 / DSM 4304 / JCM 9628 / NBRC 100126 / VC-16).